The primary structure comprises 333 residues: DNA-directed RNA polymerase subunit alpha (333 aa).

Positions 1-233 (MVREKIRVST…DLFIPFLHAE (233 aa)) are alpha N-terminal domain (alpha-NTD). Residues 269-333 (IALKYIFIDQ…DILEMEKNFA (65 aa)) are alpha C-terminal domain (alpha-CTD).

This sequence belongs to the RNA polymerase alpha chain family. In plastids the minimal PEP RNA polymerase catalytic core is composed of four subunits: alpha, beta, beta', and beta''. When a (nuclear-encoded) sigma factor is associated with the core the holoenzyme is formed, which can initiate transcription.

It is found in the plastid. Its subcellular location is the chloroplast. The catalysed reaction is RNA(n) + a ribonucleoside 5'-triphosphate = RNA(n+1) + diphosphate. DNA-dependent RNA polymerase catalyzes the transcription of DNA into RNA using the four ribonucleoside triphosphates as substrates. The sequence is that of DNA-directed RNA polymerase subunit alpha from Cucumis sativus (Cucumber).